We begin with the raw amino-acid sequence, 306 residues long: Agmatinase (306 aa).

Residues histidine 126, aspartate 149, histidine 151, aspartate 153, aspartate 230, and aspartate 232 each coordinate Mn(2+).

This sequence belongs to the arginase family. Agmatinase subfamily. The cofactor is Mn(2+).

The catalysed reaction is agmatine + H2O = urea + putrescine. It functions in the pathway amine and polyamine biosynthesis; putrescine biosynthesis via agmatine pathway; putrescine from agmatine: step 1/1. Functionally, catalyzes the formation of putrescine from agmatine. The protein is Agmatinase of Enterobacter sp. (strain 638).